The following is a 160-amino-acid chain: SsrA-binding protein (160 aa).

This sequence belongs to the SmpB family.

It is found in the cytoplasm. Required for rescue of stalled ribosomes mediated by trans-translation. Binds to transfer-messenger RNA (tmRNA), required for stable association of tmRNA with ribosomes. tmRNA and SmpB together mimic tRNA shape, replacing the anticodon stem-loop with SmpB. tmRNA is encoded by the ssrA gene; the 2 termini fold to resemble tRNA(Ala) and it encodes a 'tag peptide', a short internal open reading frame. During trans-translation Ala-aminoacylated tmRNA acts like a tRNA, entering the A-site of stalled ribosomes, displacing the stalled mRNA. The ribosome then switches to translate the ORF on the tmRNA; the nascent peptide is terminated with the 'tag peptide' encoded by the tmRNA and targeted for degradation. The ribosome is freed to recommence translation, which seems to be the essential function of trans-translation. The polypeptide is SsrA-binding protein (Shewanella amazonensis (strain ATCC BAA-1098 / SB2B)).